A 337-amino-acid chain; its full sequence is 4-hydroxyproline 2-epimerase (337 aa).

Cys-91 serves as the catalytic Proton acceptor. Residues 92–93 (GH), Asp-252, and 257–258 (GT) contribute to the substrate site.

This sequence belongs to the proline racemase family.

The catalysed reaction is trans-4-hydroxy-L-proline = cis-4-hydroxy-D-proline. Functionally, catalyzes the epimerization of trans-4-hydroxy-L-proline (t4LHyp) to cis-4-hydroxy-D-proline (c4DHyp). Is involved in a degradation pathway that converts t4LHyp to alpha-ketoglutarate, which allows R.sphaeroides to grow on t4LHyp as a sole carbon source. Displays no proline racemase activity. In Cereibacter sphaeroides (strain ATCC 17023 / DSM 158 / JCM 6121 / CCUG 31486 / LMG 2827 / NBRC 12203 / NCIMB 8253 / ATH 2.4.1.) (Rhodobacter sphaeroides), this protein is 4-hydroxyproline 2-epimerase.